Consider the following 367-residue polypeptide: Histidinol-phosphate aminotransferase (367 aa).

Lys-230 carries the post-translational modification N6-(pyridoxal phosphate)lysine.

The protein belongs to the class-II pyridoxal-phosphate-dependent aminotransferase family. Histidinol-phosphate aminotransferase subfamily. Homodimer. It depends on pyridoxal 5'-phosphate as a cofactor.

The enzyme catalyses L-histidinol phosphate + 2-oxoglutarate = 3-(imidazol-4-yl)-2-oxopropyl phosphate + L-glutamate. The protein operates within amino-acid biosynthesis; L-histidine biosynthesis; L-histidine from 5-phospho-alpha-D-ribose 1-diphosphate: step 7/9. The chain is Histidinol-phosphate aminotransferase from Thermobifida fusca (strain YX).